A 304-amino-acid chain; its full sequence is Ubiquitin thioesterase OTU1 (304 aa).

Residues 5–83 (RCKTREGTQL…IVEEDKSKLR (79 aa)) form a UBX-like region. In terms of domain architecture, OTU spans 105–230 (IVRRVVPADN…GIHYDPLQRQ (126 aa)). Positions 110–116 (VPADNSC) are cys-loop. Residue Asp-113 is part of the active site. Catalysis depends on Cys-116, which acts as the Nucleophile. The segment at 169-179 (IRREDTWGGAI) is variable-loop. The interval 219 to 223 (YDGIH) is his-loop. Ile-222 contacts substrate. His-223 is an active-site residue. The interval 247 to 252 (DEALVQ) is S2 site. Residues 274–298 (LRCMACQKGLTGQSAARDHAKETGH) form a C2H2-type zinc finger. The active site involves His-298.

The protein resides in the cytoplasm. The enzyme catalyses Thiol-dependent hydrolysis of ester, thioester, amide, peptide and isopeptide bonds formed by the C-terminal Gly of ubiquitin (a 76-residue protein attached to proteins as an intracellular targeting signal).. Its function is as follows. Hydrolase that can remove conjugated ubiquitin from proteins and participates in endoplasmic reticulum-associated degradation (ERAD) for misfolded lumenal proteins. May act by triming the ubiquitin chain on the associated substrate to facilitate their threading through the VCP/p97 pore. Ubiquitin moieties on substrates may present a steric impediment to the threading process when the substrate is transferred to the VCP pore and threaded through VCP's axial channel. Mediates deubiquitination of 'Lys-27'-, 'Lys-29'- and 'Lys-33'-linked polyubiquitin chains. Also able to hydrolyze 'Lys-11'-linked ubiquitin chains. Cleaves both polyubiquitin and di-ubiquitin. In Xenopus laevis (African clawed frog), this protein is Ubiquitin thioesterase OTU1 (yod1).